Consider the following 93-residue polypeptide: uncharacterized protein (93 aa).

This is an uncharacterized protein from Pasteurella multocida (strain Pm70).